We begin with the raw amino-acid sequence, 310 residues long: Olfactory receptor 5P53 (310 aa).

Residues 1–25 lie on the Extracellular side of the membrane; it reads MEAENHTTVAELIILGLTEDPKLCI. A glycan (N-linked (GlcNAc...) asparagine) is linked at Asn-5. The helical transmembrane segment at 26 to 46 threads the bilayer; that stretch reads VFFVIFLGVYIVTLVGNISII. Over 47–54 the chain is Cytoplasmic; the sequence is TLIRISSQ. Residues 55–75 traverse the membrane as a helical segment; that stretch reads LHTPMYLFLSHLAFVDILYST. Topologically, residues 76–99 are extracellular; that stretch reads SVSVIMHMELLGHGLALPVAACAA. A disulfide bond links Cys-97 and Cys-189. A helical membrane pass occupies residues 100-120; sequence QLCITVSFGSAECFLLAAMAY. Residues 121–133 lie on the Cytoplasmic side of the membrane; that stretch reads DRYVAICSPLLYS. A helical membrane pass occupies residues 134–154; it reads TLMSPRVCFLLLGMSYVGGCM. The Extracellular portion of the chain corresponds to 155–196; sequence NGWTFTGCLLSLSFCGPNQIDHFFCDFSPLLKLSCSDVSIIG. The helical transmembrane segment at 197 to 217 threads the bilayer; sequence IIPSISSGSIIVVTVFVIAVS. At 218 to 237 the chain is on the cytoplasmic side; sequence YIYILITILNMRSTEGRHKA. A helical transmembrane segment spans residues 238 to 258; it reads FSTCTSHLTAVTLYYGTITFI. Over 259 to 271 the chain is Extracellular; sequence YVMPKSNYSTEQN. A glycan (N-linked (GlcNAc...) asparagine) is linked at Asn-265. Residues 272–292 form a helical membrane-spanning segment; sequence KVLSVFYTVVIPMLNPLIYSL. Topologically, residues 293–310 are cytoplasmic; sequence RNRDVKEALRKATVRVYS.

It belongs to the G-protein coupled receptor 1 family.

Its subcellular location is the cell membrane. Its function is as follows. Potential odorant receptor. The sequence is that of Olfactory receptor 5P53 from Mus musculus (Mouse).